Consider the following 404-residue polypeptide: CCA-adding enzyme (404 aa).

Glycine 27 and arginine 30 together coordinate ATP. Residues glycine 27 and arginine 30 each coordinate CTP. Mg(2+) is bound by residues aspartate 40 and aspartate 42. Arginine 111, aspartate 154, arginine 157, arginine 160, and arginine 163 together coordinate ATP. Residues arginine 111, aspartate 154, arginine 157, arginine 160, and arginine 163 each coordinate CTP.

Belongs to the tRNA nucleotidyltransferase/poly(A) polymerase family. Bacterial CCA-adding enzyme type 3 subfamily. In terms of assembly, homodimer. Mg(2+) is required as a cofactor.

It carries out the reaction a tRNA precursor + 2 CTP + ATP = a tRNA with a 3' CCA end + 3 diphosphate. The catalysed reaction is a tRNA with a 3' CCA end + 2 CTP + ATP = a tRNA with a 3' CCACCA end + 3 diphosphate. Catalyzes the addition and repair of the essential 3'-terminal CCA sequence in tRNAs without using a nucleic acid template. Adds these three nucleotides in the order of C, C, and A to the tRNA nucleotide-73, using CTP and ATP as substrates and producing inorganic pyrophosphate. tRNA 3'-terminal CCA addition is required both for tRNA processing and repair. Also involved in tRNA surveillance by mediating tandem CCA addition to generate a CCACCA at the 3' terminus of unstable tRNAs. While stable tRNAs receive only 3'-terminal CCA, unstable tRNAs are marked with CCACCA and rapidly degraded. This Geobacillus sp. (strain WCH70) protein is CCA-adding enzyme.